Reading from the N-terminus, the 82-residue chain is Polyferredoxin protein FwdG (82 aa).

2 consecutive 4Fe-4S ferredoxin-type domains span residues 4-33 (YELVVYPERCHGCGNCVVSCPVNAKHPETW) and 51-80 (VVTVVNQDLCGGCGACIEACPVNAIELVFK). Residues Cys13, Cys16, Cys19, Cys23, Cys60, Cys63, Cys66, and Cys70 each contribute to the [4Fe-4S] cluster site.

It depends on [4Fe-4S] cluster as a cofactor.

In Methanocaldococcus jannaschii (strain ATCC 43067 / DSM 2661 / JAL-1 / JCM 10045 / NBRC 100440) (Methanococcus jannaschii), this protein is Polyferredoxin protein FwdG (fwdG).